We begin with the raw amino-acid sequence, 466 residues long: tRNA dimethylallyltransferase 2 (466 aa).

Residue 27–34 (GPTGSGKS) coordinates ATP. 29-34 (TGSGKS) is a substrate binding site. Positions 52-55 (DAMQ) are interaction with substrate tRNA. A disordered region spans residues 433–466 (WEHHKQGRTHRKRTTRHKNSQTYKNREVQEAEVN). Residues 437–451 (KQGRTHRKRTTRHKN) are compositionally biased toward basic residues. Basic and acidic residues predominate over residues 456–466 (KNREVQEAEVN).

Belongs to the IPP transferase family. Mg(2+) is required as a cofactor. In terms of tissue distribution, expressed ubiquitously, with highest expression in proliferating tissues.

It is found in the cytoplasm. The catalysed reaction is adenosine(37) in tRNA + dimethylallyl diphosphate = N(6)-dimethylallyladenosine(37) in tRNA + diphosphate. Catalyzes the transfer of a dimethylallyl group onto the adenine at position 37 in tRNAs that read codons beginning with uridine, leading to the formation of N6-(dimethylallyl)adenosine (i(6)A). Involved in the cis-type cytokinin biosynthesis. The chain is tRNA dimethylallyltransferase 2 (IPT2) from Arabidopsis thaliana (Mouse-ear cress).